We begin with the raw amino-acid sequence, 189 residues long: ATP-dependent protease subunit HslV (189 aa).

Threonine 12 is an active-site residue. 3 residues coordinate Na(+): serine 172, cysteine 175, and threonine 178.

Belongs to the peptidase T1B family. HslV subfamily. A double ring-shaped homohexamer of HslV is capped on each side by a ring-shaped HslU homohexamer. The assembly of the HslU/HslV complex is dependent on binding of ATP.

It is found in the cytoplasm. The enzyme catalyses ATP-dependent cleavage of peptide bonds with broad specificity.. Its activity is regulated as follows. Allosterically activated by HslU binding. Protease subunit of a proteasome-like degradation complex believed to be a general protein degrading machinery. In Ehrlichia canis (strain Jake), this protein is ATP-dependent protease subunit HslV.